A 1025-amino-acid chain; its full sequence is Multidrug resistance protein MdtC (1025 aa).

The next 12 helical transmembrane spans lie at 15–35 (ILIS…LPVA), 333–353 (EVEQ…FLFL), 360–380 (LIPA…MYLC), 387–407 (LSLM…IVVL), 431–451 (VGFT…PLLL), 469–489 (VAIG…CGWL), 528–548 (LTGL…ISIP), 851–871 (AQVI…GMLY), 875–895 (VHPL…LLAL), 897–917 (IFDA…IGIV), 953–973 (PIMM…LSGG), and 984–1004 (ITIV…TPVV).

Belongs to the resistance-nodulation-cell division (RND) (TC 2.A.6) family. MdtC subfamily. In terms of assembly, part of a tripartite efflux system composed of MdtA, MdtB and MdtC. MdtC forms a heteromultimer with MdtB.

Its subcellular location is the cell inner membrane. This chain is Multidrug resistance protein MdtC, found in Klebsiella pneumoniae (strain 342).